Here is a 558-residue protein sequence, read N- to C-terminus: Dihydroxy-acid dehydratase (558 aa).

D81 contributes to the Mg(2+) binding site. C122 is a [2Fe-2S] cluster binding site. Mg(2+) is bound by residues D123 and K124. K124 is subject to N6-carboxylysine. C195 is a binding site for [2Fe-2S] cluster. E447 lines the Mg(2+) pocket. S473 functions as the Proton acceptor in the catalytic mechanism.

Belongs to the IlvD/Edd family. As to quaternary structure, homodimer. The cofactor is [2Fe-2S] cluster. Mg(2+) serves as cofactor.

It carries out the reaction (2R)-2,3-dihydroxy-3-methylbutanoate = 3-methyl-2-oxobutanoate + H2O. It catalyses the reaction (2R,3R)-2,3-dihydroxy-3-methylpentanoate = (S)-3-methyl-2-oxopentanoate + H2O. It functions in the pathway amino-acid biosynthesis; L-isoleucine biosynthesis; L-isoleucine from 2-oxobutanoate: step 3/4. The protein operates within amino-acid biosynthesis; L-valine biosynthesis; L-valine from pyruvate: step 3/4. In terms of biological role, functions in the biosynthesis of branched-chain amino acids. Catalyzes the dehydration of (2R,3R)-2,3-dihydroxy-3-methylpentanoate (2,3-dihydroxy-3-methylvalerate) into 2-oxo-3-methylpentanoate (2-oxo-3-methylvalerate) and of (2R)-2,3-dihydroxy-3-methylbutanoate (2,3-dihydroxyisovalerate) into 2-oxo-3-methylbutanoate (2-oxoisovalerate), the penultimate precursor to L-isoleucine and L-valine, respectively. The polypeptide is Dihydroxy-acid dehydratase (Bacillus pumilus (strain SAFR-032)).